A 147-amino-acid chain; its full sequence is Ribosome-binding factor A (147 aa).

Positions 126-147 (LKKNAQPAGDAHPYKDDDAMND) are disordered. A compositionally biased stretch (basic and acidic residues) spans 137-147 (HPYKDDDAMND).

It belongs to the RbfA family. Monomer. Binds 30S ribosomal subunits, but not 50S ribosomal subunits or 70S ribosomes.

Its subcellular location is the cytoplasm. One of several proteins that assist in the late maturation steps of the functional core of the 30S ribosomal subunit. Associates with free 30S ribosomal subunits (but not with 30S subunits that are part of 70S ribosomes or polysomes). Required for efficient processing of 16S rRNA. May interact with the 5'-terminal helix region of 16S rRNA. The polypeptide is Ribosome-binding factor A (Corynebacterium diphtheriae (strain ATCC 700971 / NCTC 13129 / Biotype gravis)).